Reading from the N-terminus, the 113-residue chain is U11-theraphotoxin-Hhn1a (113 aa).

Positions M1 to A21 are cleaved as a signal peptide. Residues D22–R74 constitute a propeptide that is removed on maturation. 3 disulfides stabilise this stretch: C75/C90, C82/C95, and C89/C110.

This sequence belongs to the neurotoxin 14 (magi-1) family. 01 (HNTX-16) subfamily. In terms of tissue distribution, expressed by the venom gland.

The protein resides in the secreted. Probable ion channel inhibitor. This is U11-theraphotoxin-Hhn1a from Cyriopagopus hainanus (Chinese bird spider).